Consider the following 79-residue polypeptide: MNGFGRLEHFSGAVYEGQFKDNMFHGLGTYTFPNGAKYTGNFNENRVEGEGEYTDIQGLEWSGNFHFTAAPDLKLKLHM.

2 MORN repeats span residues 15-36 and 38-55; these read YEGQFKDNMFHGLGTYTFPNGA and YTGNFNENRVEGEGEYTD.

It localises to the cytoplasmic vesicle. Its subcellular location is the secretory vesicle. The protein resides in the acrosome. The protein localises to the nucleus. In terms of biological role, might have a role in spermatogenesis. This chain is MORN repeat-containing protein 2, found in Homo sapiens (Human).